Here is a 147-residue protein sequence, read N- to C-terminus: Hemoglobin subunit beta (147 aa).

Valine 2 is modified (N-acetylvaline). The 145-residue stretch at histidine 3–histidine 147 folds into the Globin domain. Phosphothreonine is present on threonine 13. Residue serine 45 is modified to Phosphoserine. N6-acetyllysine is present on lysine 60. Residue histidine 64 participates in heme b binding. Residue lysine 83 is modified to N6-acetyllysine. Histidine 93 is a binding site for heme b. Cysteine 94 is modified (S-nitrosocysteine). At lysine 145 the chain carries N6-acetyllysine.

Belongs to the globin family. As to quaternary structure, heterotetramer of two alpha chains and two beta chains. Red blood cells.

Functionally, involved in oxygen transport from the lung to the various peripheral tissues. The protein is Hemoglobin subunit beta (HBB) of Macaca fascicularis (Crab-eating macaque).